Consider the following 166-residue polypeptide: Crossover junction endodeoxyribonuclease RuvC (166 aa).

Catalysis depends on residues aspartate 7, glutamate 70, and histidine 143. Residues aspartate 7, glutamate 70, and histidine 143 each contribute to the Mg(2+) site.

The protein belongs to the RuvC family. Homodimer which binds Holliday junction (HJ) DNA. The HJ becomes 2-fold symmetrical on binding to RuvC with unstacked arms; it has a different conformation from HJ DNA in complex with RuvA. In the full resolvosome a probable DNA-RuvA(4)-RuvB(12)-RuvC(2) complex forms which resolves the HJ. Mg(2+) is required as a cofactor.

It is found in the cytoplasm. The enzyme catalyses Endonucleolytic cleavage at a junction such as a reciprocal single-stranded crossover between two homologous DNA duplexes (Holliday junction).. The RuvA-RuvB-RuvC complex processes Holliday junction (HJ) DNA during genetic recombination and DNA repair. Endonuclease that resolves HJ intermediates. Cleaves cruciform DNA by making single-stranded nicks across the HJ at symmetrical positions within the homologous arms, yielding a 5'-phosphate and a 3'-hydroxyl group; requires a central core of homology in the junction. The consensus cleavage sequence is 5'-(A/T)TT(C/G)-3'. Cleavage occurs on the 3'-side of the TT dinucleotide at the point of strand exchange. HJ branch migration catalyzed by RuvA-RuvB allows RuvC to scan DNA until it finds its consensus sequence, where it cleaves and resolves the cruciform DNA. This Thermus thermophilus (strain ATCC BAA-163 / DSM 7039 / HB27) protein is Crossover junction endodeoxyribonuclease RuvC.